The chain runs to 252 residues: Transmembrane ascorbate-dependent reductase CYB561 (252 aa).

An N-acetylmethionine modification is found at Met-1. The Cytoplasmic portion of the chain corresponds to 1-17 (MESPAGRTPAPGALPYY). A helical transmembrane segment spans residues 18-38 (VAFSQLLGLTVVAVTGAWLGA). A Cytochrome b561 domain is found at 20–221 (FSQLLGLTVV…FGAVVLYILT (202 aa)). The Vesicular segment spans residues 39–52 (YRGGIAWESALQFN). The chain crosses the membrane as a helical span at residues 53–73 (VHPLCMIIGLVFLQGDALLVY). Heme b-binding residues include His-54, Arg-74, and Lys-81. The Cytoplasmic segment spans residues 74-85 (RVFRNEAKRTTK). The L-ascorbate site is built by Lys-81 and Lys-85. Residues 86 to 106 (ILHGLLHVLAFVIALVGLVAV) traverse the membrane as a helical segment. Heme b contacts are provided by residues His-88, 117–120 (DLYS), and His-122. Topologically, residues 107 to 125 (FDYHRKKGIADLYSLHSWC) are vesicular. The chain crosses the membrane as a helical span at residues 126-146 (GILVFVLFLAQWLVGLGFFLF). The Cytoplasmic segment spans residues 147 to 159 (PGASFSLRSRYRP). Position 154 (Arg-154) interacts with L-ascorbate. Residues 160 to 180 (QHVFFGAAIFLLSVGTALLGL) form a helical membrane-spanning segment. The heme b site is built by His-161 and Glu-182. At 181–199 (KEALLFQLGTKYSAFESEG) the chain is on the vesicular side. Residues 200–220 (VLANVLGLLLVAFGAVVLYIL) traverse the membrane as a helical segment. The Cytoplasmic segment spans residues 221–252 (TRADWKRPLQAEEQALSMDFKTLTEGDSPSSQ). Residue Lys-226 participates in heme b binding. Residues Ser-248 and Ser-250 each carry the phosphoserine modification.

Requires heme b as cofactor.

It localises to the cytoplasmic vesicle. It is found in the secretory vesicle. Its subcellular location is the chromaffin granule membrane. It catalyses the reaction monodehydro-L-ascorbate radical(out) + L-ascorbate(in) = monodehydro-L-ascorbate radical(in) + L-ascorbate(out). In terms of biological role, transmembrane reductase that uses ascorbate as an electron donor in the cytoplasm and transfers electrons across membranes to reduce monodehydro-L-ascorbate radical in the lumen of secretory vesicles. It is therefore involved the regeneration and homeostasis within secretory vesicles of ascorbate which in turn provides reducing equivalents needed to support the activity of intravesicular enzymes. The protein is Transmembrane ascorbate-dependent reductase CYB561 (CYB561) of Sus scrofa (Pig).